Reading from the N-terminus, the 506-residue chain is Ecdysteroid UDP-glucosyltransferase (506 aa).

Residues 1–18 form the signal peptide; the sequence is MTAYLIVFCLCCWSAARS.

This sequence belongs to the UDP-glycosyltransferase family.

Its function is as follows. Catalyzes the transfer of glucose from UDP-glucose to ecdysteroids which are insect molting hormones. Expression of egt interferes with normal insect development and block molting. This is Ecdysteroid UDP-glucosyltransferase (EGT) from Lymantria dispar multicapsid nuclear polyhedrosis virus (LdMNPV).